The chain runs to 766 residues: Single-minded homolog 1 (766 aa).

One can recognise a bHLH domain in the interval 1-53 (MKEKSKNAARTRREKENSEFYELAKLLPLPSAITSQLDKASIIRLTTSYLKMR). PAS domains lie at 77-147 (GREL…QPYH) and 218-288 (PPSA…LVKG). The region spanning 292–335 (TKYYRFLAKHGGWVWVQSYATIVHNSRSSRPHCIVSVNYVLTDT) is the PAC domain. One can recognise a Single-minded C-terminal domain in the interval 336-766 (EYKGLQLSLD…GTSVIITNGS (431 aa)). Polar residues predominate over residues 353 to 365 (AFSYTSSSTPTMT). Disordered stretches follow at residues 353 to 431 (AFSY…SQHD) and 528 to 563 (WDEDSVVSSPDPGSASESGDRYRTEQYQSSPHEPSK). A Nuclear localization signal motif is present at residues 368–387 (RKGAKSRLSSSKSKSRTSPY). The span at 373-385 (SRLSSSKSKSRTS) shows a compositional bias: low complexity. A compositionally biased stretch (basic and acidic residues) spans 394 to 404 (HTERSESDHDS).

As to quaternary structure, efficient DNA binding requires dimerization with another bHLH protein. Heterodimer; forms a heterodimer with ARNT, ARNT2.

It is found in the nucleus. In terms of biological role, transcriptional factor that may have pleiotropic effects during embryogenesis and in the adult. This Pan paniscus (Pygmy chimpanzee) protein is Single-minded homolog 1 (SIM1).